The sequence spans 285 residues: Nucleotide-binding protein Geob_2284 (285 aa).

An ATP-binding site is contributed by 8 to 15 (GLSGSGKS). 59–62 (DIRG) contributes to the GTP binding site.

Belongs to the RapZ-like family.

In terms of biological role, displays ATPase and GTPase activities. This Geotalea daltonii (strain DSM 22248 / JCM 15807 / FRC-32) (Geobacter daltonii) protein is Nucleotide-binding protein Geob_2284.